Consider the following 244-residue polypeptide: Glutathione S-transferase theta-2 (244 aa).

Residues 2-82 (GLELYLDLLS…YLSSKYQVAD (81 aa)) enclose the GST N-terminal domain. Glutathione is bound by residues 40–41 (HL), 53–54 (KV), 66–67 (ES), and 104–107 (DNIR). The 143-residue stretch at 88-230 (DLQARAQVHE…AKKTLPVPPP (143 aa)) folds into the GST C-terminal domain.

Belongs to the GST superfamily. Theta family. As to quaternary structure, homodimer. Highest values found in liver followed by testis, adrenal gland, kidney, lung, brain and skeletal muscle. In liver, highest expression found in central vein limiting plate hepatocytes. In lung, expressed mainly in club cells of the bronchiolar epithelium and, at low levels, in type II alveolar cells.

The protein localises to the cytoplasm. The protein resides in the cytosol. Its subcellular location is the nucleus. The catalysed reaction is RX + glutathione = an S-substituted glutathione + a halide anion + H(+). Its function is as follows. Catalyzes the inactivation of reactive sulfate esters in carcinogenic arylmethanols. Highest activity towards ethacrynic acid and cumene hydroperoxide. The protein is Glutathione S-transferase theta-2 (Gstt2) of Rattus norvegicus (Rat).